The chain runs to 104 residues: Putative ankyrin repeat protein L677 (104 aa).

ANK repeat units lie at residues 16-43, 44-73, and 75-102; these read FNKS…NPNL, DISH…SNSV, and LEAY…NKSI.

The chain is Putative ankyrin repeat protein L677 from Acanthamoeba polyphaga (Amoeba).